We begin with the raw amino-acid sequence, 309 residues long: Mycothiol acetyltransferase (309 aa).

N-acetyltransferase domains lie at 16–158 and 166–309; these read ETLA…LDLP and VSVR…RTET. Glu-47 contacts 1D-myo-inositol 2-(L-cysteinylamino)-2-deoxy-alpha-D-glucopyranoside. 92 to 94 contributes to the acetyl-CoA binding site; it reads LVV. 1D-myo-inositol 2-(L-cysteinylamino)-2-deoxy-alpha-D-glucopyranoside is bound by residues Glu-193, Lys-232, and Glu-241. Residues 245-247 and 252-258 contribute to the acetyl-CoA site; these read LGI and QGGGLGK. Tyr-279 is a 1D-myo-inositol 2-(L-cysteinylamino)-2-deoxy-alpha-D-glucopyranoside binding site.

The protein belongs to the acetyltransferase family. MshD subfamily. Monomer.

It carries out the reaction 1D-myo-inositol 2-(L-cysteinylamino)-2-deoxy-alpha-D-glucopyranoside + acetyl-CoA = mycothiol + CoA + H(+). Catalyzes the transfer of acetyl from acetyl-CoA to desacetylmycothiol (Cys-GlcN-Ins) to form mycothiol. The polypeptide is Mycothiol acetyltransferase (Streptomyces coelicolor (strain ATCC BAA-471 / A3(2) / M145)).